Reading from the N-terminus, the 372-residue chain is CXADR-like membrane protein (372 aa).

Residues 1–17 (MSLFFLWLVTYYVGTLG) form the signal peptide. Ig-like C2-type domains lie at 18 to 126 (THTE…VILK) and 134 to 223 (PKCE…VRVT). Over 18–234 (THTEIKRVAE…QYVQSIGMVA (217 aa)) the chain is Extracellular. Intrachain disulfides connect Cys34/Cys110 and Cys152/Cys207. 2 N-linked (GlcNAc...) asparagine glycosylation sites follow: Asn73 and Asn196. A helical membrane pass occupies residues 235–255 (GAVTGIVAGALLIFLLIWLLI). The Cytoplasmic segment spans residues 256–372 (RRKSKERYEE…PSQSRAFQTV (117 aa)). Positions 263–280 (YEEEDRPNEIREDAEAPR) are enriched in basic and acidic residues. The segment at 263-372 (YEEEDRPNEI…PSQSRAFQTV (110 aa)) is disordered. Composition is skewed to low complexity over residues 287-313 (SSSS…ASRS) and 352-361 (LTKAETTLST). A compositionally biased stretch (polar residues) spans 362–372 (MPSQSRAFQTV).

As to expression, predominantly expressed in the white adipose tissue.

Its subcellular location is the cell junction. The protein localises to the tight junction. The protein resides in the cell membrane. In terms of biological role, may be involved in the cell-cell adhesion. May play a role in adipocyte differentiation and development of obesity. Is required for normal small intestine development. The polypeptide is CXADR-like membrane protein (Clmp) (Rattus norvegicus (Rat)).